The following is a 258-amino-acid chain: Tetraspanin-18B (258 aa).

Residues 1 to 25 (MGLGEASARGTSMEGDCLSCIKYLM) lie on the Cytoplasmic side of the membrane. A helical membrane pass occupies residues 26–46 (FVFNFLIFLGGSFLLGVGVWV). Over 47–61 (VVDPTGFREIVAANP) the chain is Extracellular. A helical transmembrane segment spans residues 62-82 (LLFTGVYIILAMGGMLFLLGF). Residues 83-94 (LGCCGAIRENKC) lie on the Cytoplasmic side of the membrane. A helical transmembrane segment spans residues 95 to 115 (LLLFFFMLILIIFLAELAAAI). Residues 116 to 228 (LAFIFREHLT…SAVVDYFEMY (113 aa)) are Extracellular-facing. N-linked (GlcNAc...) asparagine glycosylation occurs at Asn141. A helical transmembrane segment spans residues 229–249 (IYVAGALAIVVLTIELFAMVF). Topologically, residues 250–258 (AMCLFRGIQ) are cytoplasmic.

It belongs to the tetraspanin (TM4SF) family.

It is found in the membrane. In terms of biological role, may regulate angiogenesis through KDR/VEGFR2 and NOTCH1 pathways. The polypeptide is Tetraspanin-18B (tspan18b) (Danio rerio (Zebrafish)).